Consider the following 175-residue polypeptide: Deoxyuridine 5'-triphosphate nucleotidohydrolase (175 aa).

Substrate contacts are provided by residues Arg-67–Gly-69, Asn-80, Thr-84–Asp-86, and Lys-94. Positions Arg-138–Gln-175 are disordered.

Belongs to the dUTPase family. Requires Mg(2+) as cofactor.

The catalysed reaction is dUTP + H2O = dUMP + diphosphate + H(+). Its pathway is pyrimidine metabolism; dUMP biosynthesis; dUMP from dCTP (dUTP route): step 2/2. Functionally, this enzyme is involved in nucleotide metabolism: it produces dUMP, the immediate precursor of thymidine nucleotides and it decreases the intracellular concentration of dUTP so that uracil cannot be incorporated into DNA. In Streptomyces avermitilis (strain ATCC 31267 / DSM 46492 / JCM 5070 / NBRC 14893 / NCIMB 12804 / NRRL 8165 / MA-4680), this protein is Deoxyuridine 5'-triphosphate nucleotidohydrolase.